A 1257-amino-acid chain; its full sequence is Period circadian protein homolog 2 (1257 aa).

The disordered stretch occupies residues 1–59 (MNGYVDFSPSPTSPTQEPGEPQPTQAVLQEDVDMSSGSSGNENCSTGRDSQGSDCDDSG). Residues 8–25 (SPSPTSPTQEPGEPQPTQ) are compositionally biased toward low complexity. Over residues 35-53 (SSGSSGNENCSTGRDSQGS) the composition is skewed to polar residues. Positions 109 to 118 (LIRTLRELKV) match the Nuclear export signal 1 motif. Positions 179–246 (ITSEYIVKNS…FHSYTTPYKL (68 aa)) constitute a PAS 1 domain. The LXXLL motif lies at 306–310 (LCCLL). The PAS 2 domain maps to 319–385 (YEAPRIPPEK…MLAIHKKILQ (67 aa)). The 44-residue stretch at 393 to 436 (YSPIRFRTRNGEYITLDTSWSSFINPWSRKISFIIGRHKVRVGP) folds into the PAC domain. Residues 460-469 (LTEQIHRLLM) carry the Nuclear export signal 2 motif. The disordered stretch occupies residues 471–567 (PVPHSGSSGY…RDSSGASLPK (97 aa)). Positions 478-482 (SGYGS) are important for protein stability. Composition is skewed to polar residues over residues 493–504 (MSQTSSSDSNGQ) and 518–528 (SGKSQSKSHFS). A CSNK1E binding domain region spans residues 510–709 (RRSGIFKTSG…DAAGGLSQEK (200 aa)). Phosphoserine occurs at positions 525, 528, 531, 538, and 544. The segment covering 541 to 555 (EMQSSPPAQVRSVTT) has biased composition (polar residues). Phosphothreonine is present on Thr554. 6 positions are modified to phosphoserine: Ser659, Ser693, Ser697, Ser706, Ser758, and Ser763. 2 disordered regions span residues 678–706 (DKKPQPELETVEDVASGPESQDDAAGGLS) and 757–833 (RSRA…CPSA). Positions 778–794 (KKTGKNRKLKSKRVKTR) match the Nuclear localization signal motif. The span at 779 to 792 (KTGKNRKLKSKRVK) shows a compositional bias: basic residues. Positions 821–832 (SPSDTSQSSCPS) are enriched in low complexity. The residue at position 858 (Thr858) is a Phosphothreonine. The interaction with PPARG stretch occupies residues 882-1067 (EFAVQPLPFA…DLCSATGSAL (186 aa)). The residue at position 939 (Ser939) is a Phosphoserine. Phosphothreonine is present on Thr964. Phosphoserine is present on Ser971. A Nuclear export signal 3 motif is present at residues 983 to 990 (LQLNLLQL). Residues 993–1044 (APESSTGAAGTLGTTGTAASGLDCTSGASRDRQPKAPPTCSEPSDTQNSDAI) are disordered. Residues 996–1014 (SSTGAAGTLGTTGTAASGL) are compositionally biased toward low complexity. Over residues 1033-1044 (SEPSDTQNSDAI) the composition is skewed to polar residues. The LXXLL signature appears at 1051 to 1055 (LNLLL). Over residues 1070–1089 (SGASATSDSLGSSSLGCDTS) the composition is skewed to low complexity. The disordered stretch occupies residues 1070–1108 (SGASATSDSLGSSSLGCDTSRSGAGSSDTSHTSKYFGSI). The span at 1090 to 1108 (RSGAGSSDTSHTSKYFGSI) shows a compositional bias: polar residues. A Phosphoserine modification is found at Ser1126. The segment at 1157-1257 (SRDLQAVLKE…LANPRKEAQT (101 aa)) is CRY binding domain. Residues 1226-1257 (EEDSPSLGLCDTSEAKEEESGQLANPRKEAQT) are disordered.

Homodimer. Component of the circadian core oscillator, which includes the CRY proteins, CLOCK or NPAS2, BMAL1 or BMAL2, CSNK1D and/or CSNK1E, TIMELESS, and the PER proteins. Interacts with CLOCK-BMAL1 (off DNA). Interacts directly with PER1 and PER3, and through a C-terminal domain, with CRY1 and CRY2. Interacts (via PAS 2 domain) with TIMELESS. Interacts with NFIL3. Different large complexes have been identified with different repressive functions. The core of PER complexes is composed of at least PER1, PER2, PER3, CRY1, CRY2, CSNK1D and/or CSNK1E. The large PER complex involved in the repression of transcriptional termination is composed of at least PER2, CDK9, DDX5, DHX9, NCBP1 and POLR2A (active). The large PER complex involved in the histone deacetylation is composed of at least HDAC1, PER2, SFPQ and SIN3A. The large PER complex involved in the histone methylation is composed of at least PER2, CBX3, TRIM28, SUV39H1 and/or SUV39H2; CBX3 mediates the formation of the complex. Interacts with SETX; the interaction inhibits termination of circadian target genes. Interacts with the nuclear receptors HNF4A, NR1D1, NR4A2, RORA, PPARA, PPARG and THRA; the interaction with at least PPARG is ligand dependent. Interacts with PML. Interacts (phosphorylated) with BTRC and FBXW11; the interactions trigger proteasomal degradation. Interacts with NONO and SFPQ. Interacts with CAVIN3. Interacts with MAGEL2. Interacts with MAP1LC3B. Interacts with HNF4A. In terms of processing, acetylated. Deacetylated by SIRT1, resulting in decreased protein stability. Deacetylated by SIRT6, preventing its degradation by the proteasome, resulting in increased protein stability. Post-translationally, phosphorylated by CSNK1E and CSNK1D. Phosphorylation results in PER2 protein degradation. May be dephosphorylated by PP1. Ubiquitinated, leading to its proteasomal degradation. Ubiquitination may be inhibited by CRY1. As to expression, expressed in all tissues examined including eye, brain, heart, lung, spleen, liver, pancreas and kidney. In the CNS, highly expressed in the SCN, internal granular layer of granular cells of the olfactory bulb, tuberculum olfactorium, piriform cortex, gyrus dentatus of the hippocampus, cerebellum, pars tuberalis/median eminence, and pituitary, and moderately in the tenia tecta, caudate putamen, accumbens nucleus, superior and inferior colliculus and pineal gland.

The protein resides in the nucleus. Its subcellular location is the cytoplasm. It is found in the perinuclear region. Its function is as follows. Transcriptional repressor which forms a core component of the circadian clock. The circadian clock, an internal time-keeping system, regulates various physiological processes through the generation of approximately 24 hour circadian rhythms in gene expression, which are translated into rhythms in metabolism and behavior. It is derived from the Latin roots 'circa' (about) and 'diem' (day) and acts as an important regulator of a wide array of physiological functions including metabolism, sleep, body temperature, blood pressure, endocrine, immune, cardiovascular, and renal function. Consists of two major components: the central clock, residing in the suprachiasmatic nucleus (SCN) of the brain, and the peripheral clocks that are present in nearly every tissue and organ system. Both the central and peripheral clocks can be reset by environmental cues, also known as Zeitgebers (German for 'timegivers'). The predominant Zeitgeber for the central clock is light, which is sensed by retina and signals directly to the SCN. The central clock entrains the peripheral clocks through neuronal and hormonal signals, body temperature and feeding-related cues, aligning all clocks with the external light/dark cycle. Circadian rhythms allow an organism to achieve temporal homeostasis with its environment at the molecular level by regulating gene expression to create a peak of protein expression once every 24 hours to control when a particular physiological process is most active with respect to the solar day. Transcription and translation of core clock components (CLOCK, NPAS2, BMAL1, BMAL2, PER1, PER2, PER3, CRY1 and CRY2) plays a critical role in rhythm generation, whereas delays imposed by post-translational modifications (PTMs) are important for determining the period (tau) of the rhythms (tau refers to the period of a rhythm and is the length, in time, of one complete cycle). A diurnal rhythm is synchronized with the day/night cycle, while the ultradian and infradian rhythms have a period shorter and longer than 24 hours, respectively. Disruptions in the circadian rhythms contribute to the pathology of cardiovascular diseases, cancer, metabolic syndrome and aging. A transcription/translation feedback loop (TTFL) forms the core of the molecular circadian clock mechanism. Transcription factors, CLOCK or NPAS2 and BMAL1 or BMAL2, form the positive limb of the feedback loop, act in the form of a heterodimer and activate the transcription of core clock genes and clock-controlled genes (involved in key metabolic processes), harboring E-box elements (5'-CACGTG-3') within their promoters. The core clock genes: PER1/2/3 and CRY1/2 which are transcriptional repressors form the negative limb of the feedback loop and interact with the CLOCK|NPAS2-BMAL1|BMAL2 heterodimer inhibiting its activity and thereby negatively regulating their own expression. This heterodimer also activates nuclear receptors NR1D1/2 and RORA/B/G, which form a second feedback loop and which activate and repress BMAL1 transcription, respectively. PER1 and PER2 proteins transport CRY1 and CRY2 into the nucleus with appropriate circadian timing, but also contribute directly to repression of clock-controlled target genes through interaction with several classes of RNA-binding proteins, helicases and others transcriptional repressors. PER appears to regulate circadian control of transcription by at least three different modes. First, interacts directly with the CLOCK-BMAL1 at the tail end of the nascent transcript peak to recruit complexes containing the SIN3-HDAC that remodel chromatin to repress transcription. Second, brings H3K9 methyltransferases such as SUV39H1 and SUV39H2 to the E-box elements of the circadian target genes, like PER2 itself or PER1. The recruitment of each repressive modifier to the DNA seems to be very precisely temporally orchestrated by the large PER complex, the deacetylases acting before than the methyltransferases. Additionally, large PER complexes are also recruited to the target genes 3' termination site through interactions with RNA-binding proteins and helicases that may play a role in transcription termination to regulate transcription independently of CLOCK-BMAL1 interactions. Recruitment of large PER complexes to the elongating polymerase at PER and CRY termination sites inhibited SETX action, impeding RNA polymerase II release and thereby repressing transcriptional reinitiation. May propagate clock information to metabolic pathways via the interaction with nuclear receptors. Coactivator of PPARA and corepressor of NR1D1, binds rhythmically at the promoter of nuclear receptors target genes like BMAL1 or G6PC1. Directly and specifically represses PPARG proadipogenic activity by blocking PPARG recruitment to target promoters and thereby transcriptional activation. Required for fatty acid and lipid metabolism, is involved as well in the regulation of circulating insulin levels. Plays an important role in the maintenance of cardiovascular functions through the regulation of NO and vasodilatatory prostaglandins production in aortas. Controls circadian glutamate uptake in synaptic vesicles through the regulation of VGLUT1 expression. May also be involved in the regulation of inflammatory processes. Represses the CLOCK-BMAL1 induced transcription of BHLHE40/DEC1 and ATF4. Negatively regulates the formation of the TIMELESS-CRY1 complex by competing with TIMELESS for binding to CRY1. In Rattus norvegicus (Rat), this protein is Period circadian protein homolog 2.